Reading from the N-terminus, the 233-residue chain is Large ribosomal subunit protein uL22m (233 aa).

This sequence belongs to the universal ribosomal protein uL22 family. Component of the mitochondrial ribosome large subunit (39S) which comprises a 16S rRNA and about 50 distinct proteins.

The protein localises to the mitochondrion. The chain is Large ribosomal subunit protein uL22m (mRpL22) from Drosophila melanogaster (Fruit fly).